We begin with the raw amino-acid sequence, 297 residues long: L-threonate dehydrogenase (297 aa).

NAD(+) is bound by residues 3 to 31 (RNIG…VHAC) and Thr-97. Residue Lys-173 is part of the active site. Residue Lys-241 coordinates NAD(+).

Belongs to the HIBADH-related family. L-threonate dehydrogenase subfamily.

The enzyme catalyses L-threonate + NAD(+) = 2-dehydro-L-erythronate + NADH + H(+). Catalyzes oxidation of L-threonate to 2-oxo-tetronate. Can use either NAD(+) or NADP(+) as cosubstrate, with a preference for NAD(+). The sequence is that of L-threonate dehydrogenase from Cupriavidus necator (strain ATCC 17699 / DSM 428 / KCTC 22496 / NCIMB 10442 / H16 / Stanier 337) (Ralstonia eutropha).